The following is a 156-amino-acid chain: U4/U6.U5 small nuclear ribonucleoprotein 27 kDa protein (156 aa).

The interval 1–98 (MGRSRSRSPE…IAAEDLEGKT (98 aa)) is disordered. Basic residues predominate over residues 13–59 (RERRRSRSASRERERRRRERSRSRERRRSRSRSPHRRRSRSPRRHRS). Over residues 66 to 98 (RLKDRRDDDKKDSKESKGAKERQIAAEDLEGKT) the composition is skewed to basic and acidic residues.

It belongs to the SNUT3 family. In terms of assembly, part of a tri-snRNP complex.

It is found in the nucleus. In terms of biological role, may play a role in mRNA splicing. This Xenopus tropicalis (Western clawed frog) protein is U4/U6.U5 small nuclear ribonucleoprotein 27 kDa protein (snrnp27).